A 245-amino-acid chain; its full sequence is 1-(5-phosphoribosyl)-5-[(5-phosphoribosylamino)methylideneamino] imidazole-4-carboxamide isomerase 1 (245 aa).

Asp7 acts as the Proton acceptor in catalysis. Catalysis depends on Asp129, which acts as the Proton donor.

The protein belongs to the HisA/HisF family.

The protein resides in the cytoplasm. It catalyses the reaction 1-(5-phospho-beta-D-ribosyl)-5-[(5-phospho-beta-D-ribosylamino)methylideneamino]imidazole-4-carboxamide = 5-[(5-phospho-1-deoxy-D-ribulos-1-ylimino)methylamino]-1-(5-phospho-beta-D-ribosyl)imidazole-4-carboxamide. It functions in the pathway amino-acid biosynthesis; L-histidine biosynthesis; L-histidine from 5-phospho-alpha-D-ribose 1-diphosphate: step 4/9. The protein is 1-(5-phosphoribosyl)-5-[(5-phosphoribosylamino)methylideneamino] imidazole-4-carboxamide isomerase 1 (hisA1) of Photorhabdus laumondii subsp. laumondii (strain DSM 15139 / CIP 105565 / TT01) (Photorhabdus luminescens subsp. laumondii).